Here is a 235-residue protein sequence, read N- to C-terminus: Chalcone--flavanone isomerase 1 (235 aa).

Positions 50 and 192 each coordinate substrate.

Belongs to the chalcone isomerase family.

The enzyme catalyses a chalcone = a flavanone.. It participates in secondary metabolite biosynthesis; flavonoid biosynthesis. Catalyzes the intramolecular cyclization of bicyclic chalcones into tricyclic (S)-flavanones. Responsible for the isomerization of 4,2',4',6'-tetrahydroxychalcone (also termed chalcone) into naringenin. The protein is Chalcone--flavanone isomerase 1 (CHI1) of Chrysanthemum morifolium (Florist's daisy).